The chain runs to 346 residues: Cyclin-dependent kinase 7 (346 aa).

Ala-2 carries the N-acetylalanine modification. Residue Ser-7 is modified to Phosphoserine. The Protein kinase domain occupies 12–295 (YEKLDFLGEG…ATQALKMKYF (284 aa)). ATP is bound by residues 18–26 (LGEGQFATV) and Lys-41. The Proton acceptor role is filled by Asp-137. Ser-164 is modified (phosphoserine; by CDK1 and CDK2). Thr-170 carries the post-translational modification Phosphothreonine; by CDK2. A Phosphoserine modification is found at Ser-321.

It belongs to the protein kinase superfamily. CMGC Ser/Thr protein kinase family. CDC2/CDKX subfamily. As to quaternary structure, associates primarily with cyclin-H (CCNH) and MAT1 to form the CAK complex. CAK can further associate with the core-TFIIH to form the TFIIH basal transcription factor; this complex is sensitive to UV light. The CAK complex binds to p53/TP53 in response to DNA damage. Interacts with CDK2, SF1/NR5A1, PUF60 and PRKCI. Interacts with HINT1. In terms of processing, phosphorylation of Ser-164 during mitosis inactivates the enzyme. Phosphorylation of Thr-170 is required for activity. Phosphorylated at Ser-164 and Thr-170 by CDK2. Ubiquitous.

The protein localises to the nucleus. It is found in the cytoplasm. It localises to the perinuclear region. It carries out the reaction L-seryl-[protein] + ATP = O-phospho-L-seryl-[protein] + ADP + H(+). It catalyses the reaction L-threonyl-[protein] + ATP = O-phospho-L-threonyl-[protein] + ADP + H(+). The enzyme catalyses [DNA-directed RNA polymerase] + ATP = phospho-[DNA-directed RNA polymerase] + ADP + H(+). Its activity is regulated as follows. Inactivated by phosphorylation. Repressed by roscovitine (seliciclib, CYC202), R547 (Ro-4584820) and SNS-032 (BMS-387032). The association of p53/TP53 to the CAK complex in response to DNA damage reduces kinase activity toward CDK2 and RNA polymerase II repetitive C-terminal domain (CTD), thus stopping cell cycle progression. The inactivation by roscovitine promotes caspase-mediated apoptosis in leukemic cells. Specifically inactivated by THZ1. Serine/threonine kinase involved in cell cycle control and in RNA polymerase II-mediated RNA transcription. Cyclin-dependent kinases (CDKs) are activated by the binding to a cyclin and mediate the progression through the cell cycle. Each different complex controls a specific transition between 2 subsequent phases in the cell cycle. Required for both activation and complex formation of CDK1/cyclin-B during G2-M transition, and for activation of CDK2/cyclins during G1-S transition (but not complex formation). CDK7 is the catalytic subunit of the CDK-activating kinase (CAK) complex. Phosphorylates SPT5/SUPT5H, SF1/NR5A1, POLR2A, p53/TP53, CDK1, CDK2, CDK4, CDK6 and CDK11B/CDK11. Initiates transcription by RNA polymerase II by mediating phosphorylation of POLR2A at 'Ser-5' of the repetitive C-terminal domain (CTD) when POLR2A is in complex with DNA, promoting dissociation from DNA and initiation. CAK activates the cyclin-associated kinases CDK1, CDK2, CDK4 and CDK6 by threonine phosphorylation, thus regulating cell cycle progression. CAK complexed to the core-TFIIH basal transcription factor activates RNA polymerase II by serine phosphorylation of the CTD of POLR2A, allowing its escape from the promoter and elongation of the transcripts. Its expression and activity are constant throughout the cell cycle. Upon DNA damage, triggers p53/TP53 activation by phosphorylation, but is inactivated in turn by p53/TP53; this feedback loop may lead to an arrest of the cell cycle and of the transcription, helping in cell recovery, or to apoptosis. Required for DNA-bound peptides-mediated transcription and cellular growth inhibition. In Homo sapiens (Human), this protein is Cyclin-dependent kinase 7 (CDK7).